A 156-amino-acid chain; its full sequence is Ribosomal RNA large subunit methyltransferase H (156 aa).

S-adenosyl-L-methionine-binding positions include L73, G104, and 123–128 (ISSMTL).

The protein belongs to the RNA methyltransferase RlmH family. Homodimer.

It is found in the cytoplasm. The catalysed reaction is pseudouridine(1915) in 23S rRNA + S-adenosyl-L-methionine = N(3)-methylpseudouridine(1915) in 23S rRNA + S-adenosyl-L-homocysteine + H(+). Its function is as follows. Specifically methylates the pseudouridine at position 1915 (m3Psi1915) in 23S rRNA. The polypeptide is Ribosomal RNA large subunit methyltransferase H (Burkholderia multivorans (strain ATCC 17616 / 249)).